We begin with the raw amino-acid sequence, 239 residues long: 1-(5-phosphoribosyl)-5-[(5-phosphoribosylamino)methylideneamino] imidazole-4-carboxamide isomerase (239 aa).

The active-site Proton acceptor is the aspartate 9. The active-site Proton donor is the aspartate 131.

This sequence belongs to the HisA/HisF family.

The protein localises to the cytoplasm. The catalysed reaction is 1-(5-phospho-beta-D-ribosyl)-5-[(5-phospho-beta-D-ribosylamino)methylideneamino]imidazole-4-carboxamide = 5-[(5-phospho-1-deoxy-D-ribulos-1-ylimino)methylamino]-1-(5-phospho-beta-D-ribosyl)imidazole-4-carboxamide. The protein operates within amino-acid biosynthesis; L-histidine biosynthesis; L-histidine from 5-phospho-alpha-D-ribose 1-diphosphate: step 4/9. The protein is 1-(5-phosphoribosyl)-5-[(5-phosphoribosylamino)methylideneamino] imidazole-4-carboxamide isomerase of Phocaeicola vulgatus (strain ATCC 8482 / DSM 1447 / JCM 5826 / CCUG 4940 / NBRC 14291 / NCTC 11154) (Bacteroides vulgatus).